Here is a 367-residue protein sequence, read N- to C-terminus: Tetraacyldisaccharide 4'-kinase (367 aa).

Position 68 to 75 (Val68 to Thr75) interacts with ATP.

This sequence belongs to the LpxK family.

It carries out the reaction a lipid A disaccharide + ATP = a lipid IVA + ADP + H(+). It functions in the pathway glycolipid biosynthesis; lipid IV(A) biosynthesis; lipid IV(A) from (3R)-3-hydroxytetradecanoyl-[acyl-carrier-protein] and UDP-N-acetyl-alpha-D-glucosamine: step 6/6. Its function is as follows. Transfers the gamma-phosphate of ATP to the 4'-position of a tetraacyldisaccharide 1-phosphate intermediate (termed DS-1-P) to form tetraacyldisaccharide 1,4'-bis-phosphate (lipid IVA). The chain is Tetraacyldisaccharide 4'-kinase from Chlamydia abortus (strain DSM 27085 / S26/3) (Chlamydophila abortus).